A 739-amino-acid chain; its full sequence is NAD(P)H-quinone oxidoreductase subunit 5, chloroplastic (739 aa).

16 helical membrane passes run 9 to 29 (LIIP…LIFF), 40 to 60 (WAFP…NLSI), 89 to 109 (IDSL…LVLI), 125 to 145 (FAYM…SNLI), 147 to 167 (IHIF…FWFT), 185 to 205 (GDFG…SFEF), 224 to 244 (LFVI…SAQF), 258 to 278 (TPIS…FLVA), 283 to 303 (LFTV…ITIL), 327 to 347 (LGYI…FHLI), 354 to 374 (ALLF…VGYS), 396 to 416 (TAFF…CFWS), 425 to 445 (WLYS…TAFY), 546 to 566 (LFPL…GIPF), 605 to 625 (IFSV…YRPI), and 718 to 738 (ISSY…IFQV).

This sequence belongs to the complex I subunit 5 family. NDH is composed of at least 16 different subunits, 5 of which are encoded in the nucleus.

It localises to the plastid. The protein resides in the chloroplast thylakoid membrane. It catalyses the reaction a plastoquinone + NADH + (n+1) H(+)(in) = a plastoquinol + NAD(+) + n H(+)(out). It carries out the reaction a plastoquinone + NADPH + (n+1) H(+)(in) = a plastoquinol + NADP(+) + n H(+)(out). Its function is as follows. NDH shuttles electrons from NAD(P)H:plastoquinone, via FMN and iron-sulfur (Fe-S) centers, to quinones in the photosynthetic chain and possibly in a chloroplast respiratory chain. The immediate electron acceptor for the enzyme in this species is believed to be plastoquinone. Couples the redox reaction to proton translocation, and thus conserves the redox energy in a proton gradient. This is NAD(P)H-quinone oxidoreductase subunit 5, chloroplastic (ndhF) from Buxus microphylla (Littleleaf boxwood).